The sequence spans 625 residues: uncharacterized protein (625 aa).

The segment at residues 23–51 (CLACRRKKLKCDHGRPCSNCLKRSTIQSC) is a DNA-binding region (zn(2)-C6 fungal-type). The segment covering 93–113 (GTKSQSDYENQQSHNLPSTPS) has biased composition (polar residues). A disordered region spans residues 93-119 (GTKSQSDYENQQSHNLPSTPSADAETQ).

It localises to the nucleus. Its subcellular location is the cytoplasm. It is found in the cytoskeleton. The protein resides in the spindle. This is an uncharacterized protein from Schizosaccharomyces pombe (strain 972 / ATCC 24843) (Fission yeast).